The primary structure comprises 259 residues: Type III pantothenate kinase (259 aa).

6-13 (DVGNTNIV) contributes to the ATP binding site. Substrate is bound by residues Tyr100 and 107-110 (GADR). The Proton acceptor role is filled by Asp109. Asp129 is a K(+) binding site. Thr132 lines the ATP pocket. Substrate is bound at residue Thr184.

This sequence belongs to the type III pantothenate kinase family. In terms of assembly, homodimer. It depends on NH4(+) as a cofactor. The cofactor is K(+).

It localises to the cytoplasm. The enzyme catalyses (R)-pantothenate + ATP = (R)-4'-phosphopantothenate + ADP + H(+). It functions in the pathway cofactor biosynthesis; coenzyme A biosynthesis; CoA from (R)-pantothenate: step 1/5. Functionally, catalyzes the phosphorylation of pantothenate (Pan), the first step in CoA biosynthesis. The sequence is that of Type III pantothenate kinase from Clostridium perfringens (strain 13 / Type A).